The following is a 107-amino-acid chain: uncharacterized protein (107 aa).

A disordered region spans residues 88 to 107 (GSTPWGSGRQVNAARPIGGR).

Its subcellular location is the virion. This is an uncharacterized protein from Acanthamoeba polyphaga (Amoeba).